The chain runs to 202 residues: Imidazoleglycerol-phosphate dehydratase (202 aa).

Belongs to the imidazoleglycerol-phosphate dehydratase family.

The protein resides in the cytoplasm. It catalyses the reaction D-erythro-1-(imidazol-4-yl)glycerol 3-phosphate = 3-(imidazol-4-yl)-2-oxopropyl phosphate + H2O. It participates in amino-acid biosynthesis; L-histidine biosynthesis; L-histidine from 5-phospho-alpha-D-ribose 1-diphosphate: step 6/9. The chain is Imidazoleglycerol-phosphate dehydratase from Rhizobium leguminosarum bv. trifolii (strain WSM2304).